Here is a 352-residue protein sequence, read N- to C-terminus: Ion-translocating oxidoreductase complex subunit D (352 aa).

A run of 4 helical transmembrane segments spans residues 20-40 (IMLL…WFFG), 42-62 (GTLV…ALVL), 89-109 (IPPL…VIIA), and 123-143 (PAMI…TSWL). T187 bears the FMN phosphoryl threonine mark. The next 5 membrane-spanning stretches (helical) occupy residues 214–234 (ILAG…GLWL), 242–262 (WHIP…GWLF), 267–287 (LAAP…FFIL), 301–321 (LIFG…GGYP), and 322–342 (DGVA…DYYT).

Belongs to the NqrB/RnfD family. In terms of assembly, the complex is composed of six subunits: RsxA, RsxB, RsxC, RsxD, RsxE and RsxG. FMN serves as cofactor.

The protein localises to the cell inner membrane. Its function is as follows. Part of a membrane-bound complex that couples electron transfer with translocation of ions across the membrane. Required to maintain the reduced state of SoxR. The chain is Ion-translocating oxidoreductase complex subunit D from Shigella boydii serotype 18 (strain CDC 3083-94 / BS512).